The chain runs to 253 residues: Probable transcriptional regulatory protein RC0681 (253 aa).

Residues 1–21 are disordered; that stretch reads MAGHSKFKNIQHRKGAQDKKR.

The protein belongs to the TACO1 family.

It is found in the cytoplasm. This chain is Probable transcriptional regulatory protein RC0681, found in Rickettsia conorii (strain ATCC VR-613 / Malish 7).